The chain runs to 204 residues: Kunitz-type trypsin inhibitor KTI2 (204 aa).

A signal peptide spans 1 to 25; it reads MKSTIFFALFLVCAFTISYLPSATA. Intrachain disulfides connect Cys-65–Cys-112 and Cys-160–Cys-169.

The protein belongs to the protease inhibitor I3 (leguminous Kunitz-type inhibitor) family. Seed, and at low levels in leaf, root, and stem.

In terms of biological role, has probably no trypsin inhibitor activity. KTi2 is responsible for most of the Kunitz trypsin inhibitor activity and protein found in soybean seeds. The protein is Kunitz-type trypsin inhibitor KTI2 (KTI2) of Glycine max (Soybean).